The primary structure comprises 804 residues: DEP domain-containing protein 1A (804 aa).

Residues 24–108 enclose the DEP domain; the sequence is FRVGMPLRKH…DNNQLFRFPA (85 aa). The Rho-GAP domain occupies 282–322; that stretch reads DYFLNLPEPLLTFEYYELFVNILVVCGYITVSDRTSGIHKI. Ser513 carries the phosphoserine modification. The tract at residues 592-647 is interaction with ZNF224; sequence AINALQLCCLLLPPPNRRKLQLLMRMISRMSQNVDMPKLHEQIGTRSLMINTFSRC. Residues 726 to 760 are a coiled coil; sequence EQKISTSQAAIAELLENIVRSKSLSLKEKRRKLKQ.

Can form dimers. Interacts with ZNF224.

The protein localises to the nucleus. May be involved in transcriptional regulation as a transcriptional corepressor. The DEPDC1A-ZNF224 complex may play a critical role in bladder carcinogenesis by repressing the transcription of the A20 gene, leading to transport of NF-KB protein into the nucleus, resulting in suppression of apoptosis of bladder cancer cells. This chain is DEP domain-containing protein 1A (Depdc1a), found in Mus musculus (Mouse).